Reading from the N-terminus, the 203-residue chain is MSAIERITKAAHLIDMNDIIREGNPTLRTVAEEVTFPLSDQEIILGEKMMQFLKHSQDPVMAEKMGLRGGVGLAAPQLDISKRIIAVLVPNIVEEGETPQEAYDLEAIMYNPKIVSHSVQDAALGEGEGCLSVDRNVPGYVVRHARVTVDYFDKDGEKHRIKLKGYNSIVVQHEIDHINGIMFYDRINEKDPFAVKDGLLILE.

Positions 130 and 173 each coordinate Fe cation. Glu-174 is a catalytic residue. His-177 contributes to the Fe cation binding site.

The protein belongs to the polypeptide deformylase family. Fe(2+) serves as cofactor.

It carries out the reaction N-terminal N-formyl-L-methionyl-[peptide] + H2O = N-terminal L-methionyl-[peptide] + formate. In terms of biological role, removes the formyl group from the N-terminal Met of newly synthesized proteins. Requires at least a dipeptide for an efficient rate of reaction. N-terminal L-methionine is a prerequisite for activity but the enzyme has broad specificity at other positions. The chain is Peptide deformylase from Streptococcus pneumoniae serotype 2 (strain D39 / NCTC 7466).